The sequence spans 317 residues: Glycine--tRNA ligase alpha subunit (317 aa).

This sequence belongs to the class-II aminoacyl-tRNA synthetase family. As to quaternary structure, tetramer of two alpha and two beta subunits.

Its subcellular location is the cytoplasm. It carries out the reaction tRNA(Gly) + glycine + ATP = glycyl-tRNA(Gly) + AMP + diphosphate. The sequence is that of Glycine--tRNA ligase alpha subunit from Pseudomonas fluorescens (strain ATCC BAA-477 / NRRL B-23932 / Pf-5).